Here is a 215-residue protein sequence, read N- to C-terminus: V-type ATP synthase subunit D (215 aa).

Belongs to the V-ATPase D subunit family.

Its function is as follows. Produces ATP from ADP in the presence of a proton gradient across the membrane. The protein is V-type ATP synthase subunit D of Anaeromyxobacter sp. (strain Fw109-5).